Here is a 152-residue protein sequence, read N- to C-terminus: Large ribosomal subunit protein bL9 (152 aa).

It belongs to the bacterial ribosomal protein bL9 family.

Its function is as follows. Binds to the 23S rRNA. In Synechocystis sp. (strain ATCC 27184 / PCC 6803 / Kazusa), this protein is Large ribosomal subunit protein bL9.